A 335-amino-acid chain; its full sequence is Ankyrin repeat and SOCS box protein 1 (335 aa).

ANK repeat units lie at residues 36 to 68 (CEDT…RINE), 77 to 106 (LPCT…EVDL), 110 to 139 (KGQT…DPNG), 143 to 172 (HRST…DVDV), 191 to 220 (LVVC…NPDF), and 235 to 265 (SPGC…NLNL). The SOCS box domain maps to 286 to 335 (LQVFKEARSVPRTLLCLCRVAVRRALGKHRLHLIPSLPLPDPIKKFLLHE).

This sequence belongs to the ankyrin SOCS box (ASB) family. Interacts with CUL5 and RNF7. Interacts with TAB2 and TAB3.

It localises to the cytoplasm. Its pathway is protein modification; protein ubiquitination. In terms of biological role, probable substrate-recognition component of a SCF-like ECS (Elongin-Cullin-SOCS-box protein) E3 ligase complex which mediates the ubiquitination and subsequent proteasomal degradation of target proteins. Mediates Notch-induced ubiquitination and degradation of TCF3/E2A and JAK2. Functions as a tumor suppressor by enhancing CHCHD3 'Lys-48'-linked ubiquitination, leading to inhibition of the CHCHD3/ROS signaling pathway. Suppresses TAB2-linked 'Lys-48' polyubiquitination and consequently facilitates the initiation of NF-kappa-B and MAPK signaling cascades. May play a role in testis development. This is Ankyrin repeat and SOCS box protein 1 (ASB1) from Homo sapiens (Human).